The sequence spans 685 residues: ABC transporter G family member 26 (685 aa).

Residues 65-329 (LKFEDVEYKV…FSSLRILPEI (265 aa)) form the ABC transporter domain. Position 124–131 (124–131 (GPSGSGKT)) interacts with ATP. The ABC transmembrane type-2 domain maps to 414–623 (DQFLILSRRT…GFRLLLKVQY (210 aa)). 6 helical membrane-spanning segments follow: residues 432–452 (FDKL…LLWW), 468–488 (LMFY…VYVF), 518–538 (MVAH…MAEF), 542–562 (IPCF…SQGA), 576–596 (AGMI…YYVQ), and 648–668 (TINL…AFGY).

It belongs to the ABC transporter superfamily. ABCG family. Eye pigment precursor importer (TC 3.A.1.204) subfamily. Homo- or heterodimer. As to expression, mostly expressed in flowers, especially in tapetum within anthers.

The protein localises to the cell membrane. Its subcellular location is the endoplasmic reticulum membrane. Mediates the transport of sporopollenin precursors (e.g. polyketides) across the tapetum plasma membrane into the anther locule for polymerization on developing microspore walls, thus being required for male fertility and pollen exine formation and patterning prior to tapetum programmed cell death. The protein is ABC transporter G family member 26 of Arabidopsis thaliana (Mouse-ear cress).